The chain runs to 293 residues: Ribosomal RNA small subunit methyltransferase H (293 aa).

S-adenosyl-L-methionine contacts are provided by residues 31-33 (GGY), Asp49, Phe76, Asp97, and Gln104.

The protein belongs to the methyltransferase superfamily. RsmH family.

Its subcellular location is the cytoplasm. The catalysed reaction is cytidine(1402) in 16S rRNA + S-adenosyl-L-methionine = N(4)-methylcytidine(1402) in 16S rRNA + S-adenosyl-L-homocysteine + H(+). Specifically methylates the N4 position of cytidine in position 1402 (C1402) of 16S rRNA. The chain is Ribosomal RNA small subunit methyltransferase H from Wolbachia sp. subsp. Drosophila simulans (strain wRi).